The following is a 271-amino-acid chain: MWELRSIAFSRAVLAEFLATLLFVFFGLGSALNWPQALPSVLQIAMAFGLAIGTLVQALGHVSGAHINPAVTVACLVGCHVSFLRAVFYVAAQLLGAVAGAALLHEITPPAIRGDLAVNALNNNSTAGQAVTVELFLTLQLVLCIFPSTDKRRGKQLGHPALSIGFSVALGHLLGIHYTGCSMNPARSLAPAIVTGKFDDHWVFWIGPLVGAIVASLLYNYVLFPPAKSLSERLAVLKGLEPDTDWEEREVRRRQSVELHSPQSLPRGTKA.

The Cytoplasmic segment spans residues 1-11 (MWELRSIAFSR). Residues 12–32 (AVLAEFLATLLFVFFGLGSAL) form a helical membrane-spanning segment. Residues 33–40 (NWPQALPS) are Extracellular-facing. The chain crosses the membrane as a helical span at residues 41-59 (VLQIAMAFGLAIGTLVQAL). At 60-64 (GHVSG) the chain is on the cytoplasmic side. Residues 65–74 (AHINPAVTVA) constitute an intramembrane region (discontinuously helical). The NPA 1 signature appears at 68 to 70 (NPA). Residues 75-85 (CLVGCHVSFLR) are Cytoplasmic-facing. Residues 86 to 107 (AVFYVAAQLLGAVAGAALLHEI) form a helical membrane-spanning segment. At 108–127 (TPPAIRGDLAVNALNNNSTA) the chain is on the extracellular side. 2 N-linked (GlcNAc...) asparagine glycosylation sites follow: Asn-123 and Asn-124. A helical membrane pass occupies residues 128–148 (GQAVTVELFLTLQLVLCIFPS). Topologically, residues 149 to 156 (TDKRRGKQ) are cytoplasmic. A helical membrane pass occupies residues 157–176 (LGHPALSIGFSVALGHLLGI). Residues 177–180 (HYTG) lie on the Extracellular side of the membrane. The segment at residues 181 to 193 (CSMNPARSLAPAI) is an intramembrane region (discontinuously helical). The NPA 2 motif lies at 184-186 (NPA). At 194–201 (VTGKFDDH) the chain is on the extracellular side. A helical transmembrane segment spans residues 202 to 222 (WVFWIGPLVGAIVASLLYNYV). Residues 223–271 (LFPPAKSLSERLAVLKGLEPDTDWEEREVRRRQSVELHSPQSLPRGTKA) are Cytoplasmic-facing. The interval 249–271 (REVRRRQSVELHSPQSLPRGTKA) is disordered. Ser-256 is modified (phosphoserine). A compositionally biased stretch (polar residues) spans 261-271 (SPQSLPRGTKA).

This sequence belongs to the MIP/aquaporin (TC 1.A.8) family. Homotetramer. Ser-256 phosphorylation is necessary and sufficient for expression at the apical membrane. Endocytosis is not phosphorylation-dependent. In terms of processing, N-glycosylated. As to expression, expressed in renal collecting tubules.

The protein localises to the apical cell membrane. It is found in the basolateral cell membrane. Its subcellular location is the cell membrane. It localises to the cytoplasmic vesicle membrane. The protein resides in the golgi apparatus. The protein localises to the trans-Golgi network membrane. The catalysed reaction is H2O(in) = H2O(out). The enzyme catalyses glycerol(in) = glycerol(out). Forms a water-specific channel that provides the plasma membranes of renal collecting duct with high permeability to water, thereby permitting water to move in the direction of an osmotic gradient. Could also be permeable to glycerol. This is Aquaporin-2 from Ovis aries (Sheep).